We begin with the raw amino-acid sequence, 173 residues long: MAEKRNIFLVGPMGAGKSTIGRQLAQQLNMEFYDSDQEIEKRTGADVGWVFDVEGEDGFRDREEKVINELTEKQGIVLATGGGSVKSRETRNRLSARGVVVYLETTIEKQLARTQRDKKRPLLQVEAPPREVLEALANERNPLYEEIADVTIRTDDQSAKVVANQIIHMLESN.

14–19 (GAGKST) provides a ligand contact to ATP. Residue serine 18 participates in Mg(2+) binding. Aspartate 36, arginine 60, and glycine 82 together coordinate substrate. An ATP-binding site is contributed by arginine 120. Residue arginine 140 participates in substrate binding. Residue glutamine 157 coordinates ATP.

It belongs to the shikimate kinase family. Monomer. Mg(2+) is required as a cofactor.

It is found in the cytoplasm. It carries out the reaction shikimate + ATP = 3-phosphoshikimate + ADP + H(+). It functions in the pathway metabolic intermediate biosynthesis; chorismate biosynthesis; chorismate from D-erythrose 4-phosphate and phosphoenolpyruvate: step 5/7. Catalyzes the specific phosphorylation of the 3-hydroxyl group of shikimic acid using ATP as a cosubstrate. In Citrobacter koseri (strain ATCC BAA-895 / CDC 4225-83 / SGSC4696), this protein is Shikimate kinase 1.